A 507-amino-acid chain; its full sequence is Bifunctional purine biosynthesis protein PurH (507 aa).

Residues 1-144 (MKRALLSVSD…KNSDSVWAVV (144 aa)) enclose the MGS-like domain.

It belongs to the PurH family.

It catalyses the reaction (6R)-10-formyltetrahydrofolate + 5-amino-1-(5-phospho-beta-D-ribosyl)imidazole-4-carboxamide = 5-formamido-1-(5-phospho-D-ribosyl)imidazole-4-carboxamide + (6S)-5,6,7,8-tetrahydrofolate. The catalysed reaction is IMP + H2O = 5-formamido-1-(5-phospho-D-ribosyl)imidazole-4-carboxamide. It participates in purine metabolism; IMP biosynthesis via de novo pathway; 5-formamido-1-(5-phospho-D-ribosyl)imidazole-4-carboxamide from 5-amino-1-(5-phospho-D-ribosyl)imidazole-4-carboxamide (10-formyl THF route): step 1/1. Its pathway is purine metabolism; IMP biosynthesis via de novo pathway; IMP from 5-formamido-1-(5-phospho-D-ribosyl)imidazole-4-carboxamide: step 1/1. This chain is Bifunctional purine biosynthesis protein PurH, found in Lacticaseibacillus casei (strain BL23) (Lactobacillus casei).